The primary structure comprises 643 residues: MNIIEIKELNRYFGEGENTVHVLKNISVNIEKGDFVAIIGQSGSGKSTLMNIIGCLDTATSGSYKIDGKETNELTSDQLSDLRSQKFGFIFQRYNLLSALTAAENVALPAIYAGKSQSERLARAEELLKKLGLDGKEKNKPSELSGGQQQRVSIARALMNGGEIILADEPTGALDSHSGENVLEILRQLHSEGHTIIMVTHDKNIAASANRIIEIKDGEIIDDTQKHPVQNTVNNQSKAKSRFGFSKDQLMEAFQMSVSAIIAHKMRSLLTMLGIIIGITSVVSVVALGNGSQQKILSNISGLGTNTMTIFNGTGFGDRRAEQMQNLTVNDANALAKQSYVQNVTPNSSSSGLLIYGNQSFTSTNLKGIGEQYFDVEGMTLKQGRSITAQEVRDNAQVALLDESSKKSIFPNDNPIDKIVMFAKRPFRIIGVVADRQMGAASSSLNIYAPYTTVMNKVTGGTKIDSITVKIADNVNTAVAEKSLTEYLTVRHGKKDFFIMNSDTIKQTIESTTGTMKLLISSIAFISLIVGGIGVMNIMLVSVTERTKEIGVRMAIGARKSNILQQFLIEAILICMIGGISGIMLSLIIGGIFNVFMTDFTMVFSTFSIVAAVLCSTLIGVIFGYMPAKNAAQLDPITALARE.

In terms of domain architecture, ABC transporter spans 4-242 (IEIKELNRYF…VNNQSKAKSR (239 aa)). ATP is bound at residue 40–47 (GQSGSGKS). 4 helical membrane passes run 269–289 (LLTM…VALG), 523–543 (IAFI…LVSV), 572–592 (ILIC…IGGI), and 603–623 (VFST…GVIF).

It belongs to the ABC transporter superfamily. Macrolide exporter (TC 3.A.1.122) family. As to quaternary structure, homodimer. Part of the tripartite efflux system MacAB-TolC, which is composed of an inner membrane transporter, MacB, a periplasmic membrane fusion protein, MacA, and an outer membrane component, TolC. The complex forms a large protein conduit and can translocate molecules across both the inner and outer membranes. Interacts with MacA.

The protein resides in the cell inner membrane. Functionally, part of the tripartite efflux system MacAB-TolC. MacB is a non-canonical ABC transporter that contains transmembrane domains (TMD), which form a pore in the inner membrane, and an ATP-binding domain (NBD), which is responsible for energy generation. Confers resistance against macrolides. This is Macrolide export ATP-binding/permease protein MacB from Mannheimia succiniciproducens (strain KCTC 0769BP / MBEL55E).